The sequence spans 101 residues: ATP synthase subunit c (101 aa).

2 helical membrane passes run 31 to 51 (AFAY…GAGQ) and 81 to 101 (AISE…IFVG).

It belongs to the ATPase C chain family. As to quaternary structure, F-type ATPases have 2 components, F(1) - the catalytic core - and F(0) - the membrane proton channel. F(1) has five subunits: alpha(3), beta(3), gamma(1), delta(1), epsilon(1). F(0) has three main subunits: a(1), b(2) and c(10-14). The alpha and beta chains form an alternating ring which encloses part of the gamma chain. F(1) is attached to F(0) by a central stalk formed by the gamma and epsilon chains, while a peripheral stalk is formed by the delta and b chains.

The protein resides in the cell membrane. F(1)F(0) ATP synthase produces ATP from ADP in the presence of a proton or sodium gradient. F-type ATPases consist of two structural domains, F(1) containing the extramembraneous catalytic core and F(0) containing the membrane proton channel, linked together by a central stalk and a peripheral stalk. During catalysis, ATP synthesis in the catalytic domain of F(1) is coupled via a rotary mechanism of the central stalk subunits to proton translocation. In terms of biological role, key component of the F(0) channel; it plays a direct role in translocation across the membrane. A homomeric c-ring of between 10-14 subunits forms the central stalk rotor element with the F(1) delta and epsilon subunits. This chain is ATP synthase subunit c, found in Mesomycoplasma hyopneumoniae (strain 232) (Mycoplasma hyopneumoniae).